We begin with the raw amino-acid sequence, 416 residues long: Glutamyl-tRNA reductase (416 aa).

Residues T50–R53, S109, E114–Q116, and Q120 contribute to the substrate site. The active-site Nucleophile is C51. G189 to I194 contacts NADP(+).

This sequence belongs to the glutamyl-tRNA reductase family. Homodimer.

It carries out the reaction (S)-4-amino-5-oxopentanoate + tRNA(Glu) + NADP(+) = L-glutamyl-tRNA(Glu) + NADPH + H(+). It participates in porphyrin-containing compound metabolism; protoporphyrin-IX biosynthesis; 5-aminolevulinate from L-glutamyl-tRNA(Glu): step 1/2. Functionally, catalyzes the NADPH-dependent reduction of glutamyl-tRNA(Glu) to glutamate 1-semialdehyde (GSA). This Ruthia magnifica subsp. Calyptogena magnifica protein is Glutamyl-tRNA reductase.